The sequence spans 240 residues: MILLISDLHLEEERPDITRAFLHFLATRATQAEALYILGDFFEVWIGDDAMTPFQESIARALHALSERGVRIYLMHGNRDFMIGQTFCHKAGCKLLADPSVVQLCGEPVLLMHGDSLCTRDEGYMRLRRLLRNPLSLFVLRNLPLATRRKLARKLRNESRTQTRMKASDIIDVTPELIPGVLAEHRVRTLIHGHTHRPATHDLEVDGQPAKRIVLGDWDRQGWALQVDENGYHQAPFALS.

Residues Asp-7, His-9, Asp-40, Asn-78, and His-113 each contribute to the Mn(2+) site. Residue 78 to 79 (NR) coordinates substrate. The substrate site is built by Asp-121, Ser-159, Thr-163, Lys-166, and His-194. Residues His-194 and His-196 each contribute to the Mn(2+) site.

Belongs to the LpxH family. Mn(2+) serves as cofactor.

It is found in the cell inner membrane. The enzyme catalyses UDP-2-N,3-O-bis[(3R)-3-hydroxytetradecanoyl]-alpha-D-glucosamine + H2O = 2-N,3-O-bis[(3R)-3-hydroxytetradecanoyl]-alpha-D-glucosaminyl 1-phosphate + UMP + 2 H(+). The protein operates within glycolipid biosynthesis; lipid IV(A) biosynthesis; lipid IV(A) from (3R)-3-hydroxytetradecanoyl-[acyl-carrier-protein] and UDP-N-acetyl-alpha-D-glucosamine: step 4/6. In terms of biological role, hydrolyzes the pyrophosphate bond of UDP-2,3-diacylglucosamine to yield 2,3-diacylglucosamine 1-phosphate (lipid X) and UMP by catalyzing the attack of water at the alpha-P atom. Involved in the biosynthesis of lipid A, a phosphorylated glycolipid that anchors the lipopolysaccharide to the outer membrane of the cell. This chain is UDP-2,3-diacylglucosamine hydrolase, found in Stutzerimonas stutzeri (strain A1501) (Pseudomonas stutzeri).